Reading from the N-terminus, the 146-residue chain is Hemoglobin subunit beta (146 aa).

V1 is subject to N-acetylvaline. In terms of domain architecture, Globin spans 2–146 (HLTAEEKSAV…VANALAHKYH (145 aa)). The residue at position 44 (S44) is a Phosphoserine. The residue at position 59 (K59) is an N6-acetyllysine. H63 lines the heme b pocket. Position 82 is an N6-acetyllysine (K82). H92 contacts heme b. Residue C93 is modified to S-nitrosocysteine. An N6-acetyllysine modification is found at K144.

It belongs to the globin family. As to quaternary structure, heterotetramer of two alpha chains and two beta chains. As to expression, red blood cells.

In terms of biological role, involved in oxygen transport from the lung to the various peripheral tissues. This chain is Hemoglobin subunit beta, found in Tamias merriami (Merriam's chipmunk).